The sequence spans 64 residues: Conotoxin Am1.1 (64 aa).

The signal sequence occupies residues 1–22; it reads MSCLPVFVILLLLTASGPSVDA. The propeptide occupies 23 to 49; sequence RLKTKDDVPLSSFRDNAKSTLRRLQDK. A 4-hydroxyproline; partial; in major form modification is found at P60.

Belongs to the conotoxin T superfamily. In terms of processing, contains 2 disulfide bonds. In terms of tissue distribution, expressed by the venom duct.

It localises to the secreted. Probable toxin that inhibits ion channels. The polypeptide is Conotoxin Am1.1 (Conus amadis (Amadis cone)).